A 778-amino-acid polypeptide reads, in one-letter code: Probable cation-transporting ATPase exp7 (778 aa).

Residues 1 to 37 (MDKNKIMGLTQREVKERQAEGLVNDFTASASTSTWQI) lie on the Cytoplasmic side of the membrane. The helical transmembrane segment at 38 to 57 (VKRNVFTLFNALNFAIALAL) threads the bilayer. Over 58 to 64 (AFVQAWS) the chain is Extracellular. The chain crosses the membrane as a helical span at residues 65 to 84 (NLVFFAVICFNAFSGIVTEL). The Cytoplasmic segment spans residues 85–209 (RAKHMVDKLN…PINSRIMKSL (125 aa)). Residues 210-229 (DKLAGFTGKIIIPFGLALLL) form a helical membrane-spanning segment. Residues 230-242 (EALLLKGLPLKSS) lie on the Extracellular side of the membrane. Residues 243 to 260 (VVNSSTALLGMLPKGIAL) form a helical membrane-spanning segment. Residues 261-586 (LTITSLLTAV…FEGRRVVNNI (326 aa)) are Cytoplasmic-facing. The active-site 4-aspartylphosphate intermediate is D298. Mg(2+)-binding residues include D532 and D536. A helical membrane pass occupies residues 587-606 (AHIAPIFLIKTIYSFLLAVI). Over 607-624 (CIASALLGRSEWILIFPF) the chain is Extracellular. The chain crosses the membrane as a helical span at residues 625-645 (IPIQITMIDQFVEGFPPFVLT). Over 646 to 663 (FERNIKPVEQNFLRKSML) the chain is Cytoplasmic. The chain crosses the membrane as a helical span at residues 664 to 684 (RALPSALMVVFSVLFVKMFGA). Residues 685–689 (SQGWS) are Extracellular-facing. A helical membrane pass occupies residues 690–708 (ELEISTLLYYLLGSIGFLS). The Cytoplasmic segment spans residues 709–716 (VFRACMPF). A helical membrane pass occupies residues 717-739 (TLWRVLLIVWSVGGFLATALFPR). Over 740–757 (IQKLLEISTLTEQTLPVY) the chain is Extracellular. Residues 758-777 (GVMMLVFTVIFILTSRYQAK) traverse the membrane as a helical segment. Residue K778 is a topological domain, cytoplasmic.

This sequence belongs to the cation transport ATPase (P-type) (TC 3.A.3) family.

Its subcellular location is the cell membrane. It catalyses the reaction ATP + H2O = ADP + phosphate + H(+). This chain is Probable cation-transporting ATPase exp7 (exp7), found in Streptococcus pneumoniae serotype 4 (strain ATCC BAA-334 / TIGR4).